A 266-amino-acid chain; its full sequence is Phage-like element PBSX protein XkdC (266 aa).

Residue 124 to 131 coordinates ATP; the sequence is GQPGSGKT.

The protein to B.subtilis YqaM.

May function as a transcriptional antiterminator. The protein is Phage-like element PBSX protein XkdC (xkdC) of Bacillus subtilis (strain 168).